Consider the following 413-residue polypeptide: Serine hydroxymethyltransferase (413 aa).

Residues L120 and 124-126 (GHL) contribute to the (6S)-5,6,7,8-tetrahydrofolate site. K229 carries the N6-(pyridoxal phosphate)lysine modification. 352-354 (SPF) contacts (6S)-5,6,7,8-tetrahydrofolate.

It belongs to the SHMT family. Homodimer. Pyridoxal 5'-phosphate serves as cofactor.

It localises to the cytoplasm. The catalysed reaction is (6R)-5,10-methylene-5,6,7,8-tetrahydrofolate + glycine + H2O = (6S)-5,6,7,8-tetrahydrofolate + L-serine. Its pathway is one-carbon metabolism; tetrahydrofolate interconversion. It participates in amino-acid biosynthesis; glycine biosynthesis; glycine from L-serine: step 1/1. In terms of biological role, catalyzes the reversible interconversion of serine and glycine with tetrahydrofolate (THF) serving as the one-carbon carrier. This reaction serves as the major source of one-carbon groups required for the biosynthesis of purines, thymidylate, methionine, and other important biomolecules. Also exhibits THF-independent aldolase activity toward beta-hydroxyamino acids, producing glycine and aldehydes, via a retro-aldol mechanism. The polypeptide is Serine hydroxymethyltransferase (Heliobacterium modesticaldum (strain ATCC 51547 / Ice1)).